Reading from the N-terminus, the 556-residue chain is Jerky protein homolog (556 aa).

Residues 11–62 (RGEKRKRVVLTLKEKIDICTRLEKGESRKALMQEYNVGMSTLYDIRAHKAQL) form the HTH psq-type domain. 2 DNA-binding regions (H-T-H motif) span residues 38 to 58 (RKAL…IRAH) and 110 to 142 (PMLI…FKAR). The 73-residue stretch at 77-149 (QRRTLHTPKL…KARHGIKKLD (73 aa)) folds into the HTH CENPB-type domain. The region spanning 213–382 (KDRLTVLMCA…VPSHVFRRAW (170 aa)) is the DDE-1 domain. S414 bears the Phosphoserine mark. The tract at residues 439 to 482 (SWGVAGREAEGGRPPAATSPAEVVWSSEKTPKADQDGRGDPGEG) is disordered. The span at 467–479 (KTPKADQDGRGDP) shows a compositional bias: basic and acidic residues.

Belongs to the tigger transposable element derived protein family. Expressed ubiquitously.

It localises to the nucleus. Its function is as follows. May bind DNA. In Homo sapiens (Human), this protein is Jerky protein homolog.